The sequence spans 77 residues: Putative neurotoxin 1 (77 aa).

Residues 1 to 25 (MKAFIAILSIAIVLLLIVSIKETSA) form the signal peptide. A propeptide spanning residues 26–46 (KDCKQECVKRYTKGDLTNFLK) is cleaved from the precursor.

This sequence belongs to the scolopendra neurotoxin 3 family. Post-translationally, contains 2 disulfide bonds. Expressed by the venom gland.

It localises to the secreted. The chain is Putative neurotoxin 1 from Scolopendra mutilans (Chinese red-headed centipede).